Here is a 734-residue protein sequence, read N- to C-terminus: Photosystem I P700 chlorophyll a apoprotein A2 (734 aa).

The next 8 membrane-spanning stretches (helical) occupy residues 46-69, 135-158, 175-199, 273-291, 330-353, 369-395, 417-439, and 517-535; these read IFAS…FHVA, LYTG…LHLQ, LNHH…HVAI, MAHH…GHMY, IHFQ…QHMY, AALY…IFFI, AIIS…LYVH, and FLVH…LILV. Residues C559 and C568 each coordinate [4Fe-4S] cluster. A run of 2 helical transmembrane segments spans residues 575–596 and 643–665; these read AFYL…YWHW and LSVW…MFLI. 3 residues coordinate chlorophyll a: H654, M662, and Y670. W671 contacts phylloquinone. Residues 707–727 form a helical membrane-spanning segment; it reads LVGLAHFSVGYIFTYAAFLIA.

Belongs to the PsaA/PsaB family. The PsaA/B heterodimer binds the P700 chlorophyll special pair and subsequent electron acceptors. PSI consists of a core antenna complex that captures photons, and an electron transfer chain that converts photonic excitation into a charge separation. The eukaryotic PSI reaction center is composed of at least 11 subunits. P700 is a chlorophyll a/chlorophyll a' dimer, A0 is one or more chlorophyll a, A1 is one or both phylloquinones and FX is a shared 4Fe-4S iron-sulfur center. is required as a cofactor.

The protein resides in the plastid. It is found in the chloroplast thylakoid membrane. The catalysed reaction is reduced [plastocyanin] + hnu + oxidized [2Fe-2S]-[ferredoxin] = oxidized [plastocyanin] + reduced [2Fe-2S]-[ferredoxin]. Functionally, psaA and PsaB bind P700, the primary electron donor of photosystem I (PSI), as well as the electron acceptors A0, A1 and FX. PSI is a plastocyanin-ferredoxin oxidoreductase, converting photonic excitation into a charge separation, which transfers an electron from the donor P700 chlorophyll pair to the spectroscopically characterized acceptors A0, A1, FX, FA and FB in turn. Oxidized P700 is reduced on the lumenal side of the thylakoid membrane by plastocyanin. The polypeptide is Photosystem I P700 chlorophyll a apoprotein A2 (Crucihimalaya wallichii (Rock-cress)).